The following is a 483-amino-acid chain: UDP-N-acetylmuramate--L-alanine ligase (483 aa).

112–118 (GTHGKTT) provides a ligand contact to ATP.

Belongs to the MurCDEF family.

The protein resides in the cytoplasm. It carries out the reaction UDP-N-acetyl-alpha-D-muramate + L-alanine + ATP = UDP-N-acetyl-alpha-D-muramoyl-L-alanine + ADP + phosphate + H(+). The protein operates within cell wall biogenesis; peptidoglycan biosynthesis. Cell wall formation. This Ralstonia pickettii (strain 12J) protein is UDP-N-acetylmuramate--L-alanine ligase.